The sequence spans 352 residues: 3-isopropylmalate dehydrogenase (352 aa).

76–89 provides a ligand contact to NAD(+); sequence GYKWENLPHDKKPE. Positions 96, 106, 134, and 220 each coordinate substrate. Residues D220, D244, and D248 each contribute to the Mg(2+) site. 277–289 serves as a coordination point for NAD(+); it reads GSAPDIAGQNKAN.

This sequence belongs to the isocitrate and isopropylmalate dehydrogenases family. LeuB type 1 subfamily. Homodimer. It depends on Mg(2+) as a cofactor. The cofactor is Mn(2+).

The protein localises to the cytoplasm. It catalyses the reaction (2R,3S)-3-isopropylmalate + NAD(+) = 4-methyl-2-oxopentanoate + CO2 + NADH. The protein operates within amino-acid biosynthesis; L-leucine biosynthesis; L-leucine from 3-methyl-2-oxobutanoate: step 3/4. Its function is as follows. Catalyzes the oxidation of 3-carboxy-2-hydroxy-4-methylpentanoate (3-isopropylmalate) to 3-carboxy-4-methyl-2-oxopentanoate. The product decarboxylates to 4-methyl-2 oxopentanoate. This chain is 3-isopropylmalate dehydrogenase, found in Chlorobaculum tepidum (strain ATCC 49652 / DSM 12025 / NBRC 103806 / TLS) (Chlorobium tepidum).